Reading from the N-terminus, the 377-residue chain is Delta(12) fatty acid desaturase DES8.11 (377 aa).

Helical transmembrane passes span 55–75 and 79–99; these read LIVA…IPTP and LAWP…WVIG. The short motif at 100–104 is the Histidine box-1 element; it reads HECGH. The helical transmembrane segment at 112-132 threads the bilayer; it reads LIDDIVGFVLHSALLTPYFSW. The Histidine box-2 motif lies at 136 to 140; it reads HRNHH. Transmembrane regions (helical) follow at residues 174–194, 220–240, and 244–264; these read VFTL…TNIS, VLLS…LVAA, and AWVI…FVLI. Positions 310 to 314 match the Histidine box-3 motif; it reads HVLHH.

The protein belongs to the fatty acid desaturase type 1 family.

The protein resides in the membrane. Its pathway is lipid metabolism; polyunsaturated fatty acid biosynthesis. In terms of biological role, converts linoleic acid into a conjugated octadecatrienoic acid, probably calendic acid. The chain is Delta(12) fatty acid desaturase DES8.11 from Calendula officinalis (Pot marigold).